A 233-amino-acid polypeptide reads, in one-letter code: Defense protein 3 (233 aa).

A signal peptide spans 1–17; it reads MFGKFVLLAVLLVGVNS. The propeptide occupies 18-45; the sequence is RYVIIEDPVYYIEDHELPEQWTSSRVRR.

The protein belongs to the attacin/sarcotoxin-2 family.

Its subcellular location is the secreted. In terms of biological role, has antibacterial activity against both Gram-positive and Gram-negative bacteria. In Lonomia obliqua (Moth), this protein is Defense protein 3.